A 388-amino-acid polypeptide reads, in one-letter code: Chaperone protein DnaJ (388 aa).

The region spanning 5–70 (DYYEVLGVAR…QKRAAYDRFG (66 aa)) is the J domain. The CR-type zinc-finger motif lies at 141-219 (GKTETIRLPT…CGGAGRVTRE (79 aa)). Zn(2+) is bound by residues C154, C157, C171, C174, C193, C196, C207, and C210. CXXCXGXG motif repeat units lie at residues 154–161 (CEVCAGSG), 171–178 (CPTCGGYG), 193–200 (CPNCHGRG), and 207–214 (CTACGGAG).

The protein belongs to the DnaJ family. As to quaternary structure, homodimer. Zn(2+) is required as a cofactor.

It is found in the cytoplasm. Participates actively in the response to hyperosmotic and heat shock by preventing the aggregation of stress-denatured proteins and by disaggregating proteins, also in an autonomous, DnaK-independent fashion. Unfolded proteins bind initially to DnaJ; upon interaction with the DnaJ-bound protein, DnaK hydrolyzes its bound ATP, resulting in the formation of a stable complex. GrpE releases ADP from DnaK; ATP binding to DnaK triggers the release of the substrate protein, thus completing the reaction cycle. Several rounds of ATP-dependent interactions between DnaJ, DnaK and GrpE are required for fully efficient folding. Also involved, together with DnaK and GrpE, in the DNA replication of plasmids through activation of initiation proteins. This chain is Chaperone protein DnaJ, found in Methylobacterium nodulans (strain LMG 21967 / CNCM I-2342 / ORS 2060).